The primary structure comprises 970 residues: Glycine dehydrogenase (decarboxylating) (970 aa).

The residue at position 723 (Lys723) is an N6-(pyridoxal phosphate)lysine.

This sequence belongs to the GcvP family. In terms of assembly, the glycine cleavage system is composed of four proteins: P, T, L and H. It depends on pyridoxal 5'-phosphate as a cofactor.

The catalysed reaction is N(6)-[(R)-lipoyl]-L-lysyl-[glycine-cleavage complex H protein] + glycine + H(+) = N(6)-[(R)-S(8)-aminomethyldihydrolipoyl]-L-lysyl-[glycine-cleavage complex H protein] + CO2. Its function is as follows. The glycine cleavage system catalyzes the degradation of glycine. The P protein binds the alpha-amino group of glycine through its pyridoxal phosphate cofactor; CO(2) is released and the remaining methylamine moiety is then transferred to the lipoamide cofactor of the H protein. This chain is Glycine dehydrogenase (decarboxylating), found in Burkholderia pseudomallei (strain 1106a).